A 129-amino-acid chain; its full sequence is Small ribosomal subunit protein uS9 (129 aa).

Belongs to the universal ribosomal protein uS9 family.

This Aliarcobacter butzleri (strain RM4018) (Arcobacter butzleri) protein is Small ribosomal subunit protein uS9.